The sequence spans 572 residues: Phosphoenolpyruvate-protein phosphotransferase (572 aa).

His191 (tele-phosphohistidine intermediate) is an active-site residue. Positions 298 and 334 each coordinate phosphoenolpyruvate. 2 residues coordinate Mg(2+): Glu433 and Asp457. Phosphoenolpyruvate contacts are provided by residues 456–457 and Arg467; that span reads ND. Cys504 serves as the catalytic Proton donor.

This sequence belongs to the PEP-utilizing enzyme family. Homodimer. Requires Mg(2+) as cofactor.

The protein resides in the cytoplasm. The catalysed reaction is L-histidyl-[protein] + phosphoenolpyruvate = N(pros)-phospho-L-histidyl-[protein] + pyruvate. Its function is as follows. General (non sugar-specific) component of the phosphoenolpyruvate-dependent sugar phosphotransferase system (sugar PTS). This major carbohydrate active-transport system catalyzes the phosphorylation of incoming sugar substrates concomitantly with their translocation across the cell membrane. Enzyme I transfers the phosphoryl group from phosphoenolpyruvate (PEP) to the phosphoryl carrier protein (HPr). The sequence is that of Phosphoenolpyruvate-protein phosphotransferase (ptsI) from Staphylococcus epidermidis (strain ATCC 35984 / DSM 28319 / BCRC 17069 / CCUG 31568 / BM 3577 / RP62A).